The following is a 202-amino-acid chain: Ribosomal RNA small subunit methyltransferase G (202 aa).

S-adenosyl-L-methionine contacts are provided by residues glycine 75, phenylalanine 80, 125-126 (VQ), and arginine 139.

It belongs to the methyltransferase superfamily. RNA methyltransferase RsmG family.

Its subcellular location is the cytoplasm. Its function is as follows. Specifically methylates the N7 position of a guanine in 16S rRNA. The protein is Ribosomal RNA small subunit methyltransferase G of Mesomycoplasma hyopneumoniae (strain J / ATCC 25934 / NCTC 10110) (Mycoplasma hyopneumoniae).